We begin with the raw amino-acid sequence, 118 residues long: Small ribosomal subunit protein uS13 (118 aa).

The tract at residues 94–118 (GLPLRGQRTKTNARTRKGPRKPIRK) is disordered.

The protein belongs to the universal ribosomal protein uS13 family. Part of the 30S ribosomal subunit. Forms a loose heterodimer with protein S19. Forms two bridges to the 50S subunit in the 70S ribosome.

In terms of biological role, located at the top of the head of the 30S subunit, it contacts several helices of the 16S rRNA. In the 70S ribosome it contacts the 23S rRNA (bridge B1a) and protein L5 of the 50S subunit (bridge B1b), connecting the 2 subunits; these bridges are implicated in subunit movement. Contacts the tRNAs in the A and P-sites. This is Small ribosomal subunit protein uS13 from Chromohalobacter salexigens (strain ATCC BAA-138 / DSM 3043 / CIP 106854 / NCIMB 13768 / 1H11).